Consider the following 372-residue polypeptide: tRNA-specific 2-thiouridylase MnmA (372 aa).

Residues 16-23 (GMSGGVDS) and Met42 contribute to the ATP site. The interval 102 to 104 (NPD) is interaction with target base in tRNA. The active-site Nucleophile is the Cys107. Cys107 and Cys205 form a disulfide bridge. Gly132 is an ATP binding site. An interaction with tRNA region spans residues 155 to 157 (KDQ). The active-site Cysteine persulfide intermediate is the Cys205. Positions 317–318 (RY) are interaction with tRNA.

The protein belongs to the MnmA/TRMU family.

The protein resides in the cytoplasm. The enzyme catalyses S-sulfanyl-L-cysteinyl-[protein] + uridine(34) in tRNA + AH2 + ATP = 2-thiouridine(34) in tRNA + L-cysteinyl-[protein] + A + AMP + diphosphate + H(+). Catalyzes the 2-thiolation of uridine at the wobble position (U34) of tRNA, leading to the formation of s(2)U34. This chain is tRNA-specific 2-thiouridylase MnmA, found in Shewanella sp. (strain W3-18-1).